Reading from the N-terminus, the 291-residue chain is MIRYPAVAGQFYPEGETLVEMLEEFFRDLGEQGNSRKITAGVAPHAGYVFSGYTASRTYKAIYEDGLPETFVIFGPNHTGLGSPIAVYPEGDWVTPLGKVKIDSELAKEIVKLSKIADLDDLAHKYEHSIEVQLPFIQYIAEKAGTDFRIVPITLGIQDEDVSEALGRAVFEAAEALGRDVIVIASTDFMHYGSFYGYVPFRGRANELPNMVKEWDMRIIRRILDFDLKGMFEEIREMDHTMCGPGGVGAGIVYSRLMNAREAELLHYTTSFEVSRSTDAIVGYASIVMRR.

Belongs to the MEMO1 family.

This Pyrococcus abyssi (strain GE5 / Orsay) protein is MEMO1 family protein PYRAB05390.